We begin with the raw amino-acid sequence, 164 residues long: Peptide deformylase-like (164 aa).

Residue glutamate 133 is part of the active site.

The protein belongs to the polypeptide deformylase family.

The polypeptide is Peptide deformylase-like (Agrobacterium fabrum (strain C58 / ATCC 33970) (Agrobacterium tumefaciens (strain C58))).